The primary structure comprises 149 residues: Large ribosomal subunit protein bL9 (149 aa).

It belongs to the bacterial ribosomal protein bL9 family.

Binds to the 23S rRNA. In Synechococcus sp. (strain JA-2-3B'a(2-13)) (Cyanobacteria bacterium Yellowstone B-Prime), this protein is Large ribosomal subunit protein bL9.